The following is a 469-amino-acid chain: ATP-dependent protease ATPase subunit HslU (469 aa).

Residues I21, G63–E68, D282, E347, and R419 contribute to the ATP site.

It belongs to the ClpX chaperone family. HslU subfamily. In terms of assembly, a double ring-shaped homohexamer of HslV is capped on each side by a ring-shaped HslU homohexamer. The assembly of the HslU/HslV complex is dependent on binding of ATP.

The protein resides in the cytoplasm. Functionally, ATPase subunit of a proteasome-like degradation complex; this subunit has chaperone activity. The binding of ATP and its subsequent hydrolysis by HslU are essential for unfolding of protein substrates subsequently hydrolyzed by HslV. HslU recognizes the N-terminal part of its protein substrates and unfolds these before they are guided to HslV for hydrolysis. This Petrotoga mobilis (strain DSM 10674 / SJ95) protein is ATP-dependent protease ATPase subunit HslU.